Consider the following 584-residue polypeptide: 2-succinyl-5-enolpyruvyl-6-hydroxy-3-cyclohexene-1-carboxylate synthase (584 aa).

Belongs to the TPP enzyme family. MenD subfamily. Homodimer. The cofactor is Mg(2+). Mn(2+) serves as cofactor. Requires thiamine diphosphate as cofactor.

It carries out the reaction isochorismate + 2-oxoglutarate + H(+) = 5-enolpyruvoyl-6-hydroxy-2-succinyl-cyclohex-3-ene-1-carboxylate + CO2. The protein operates within quinol/quinone metabolism; 1,4-dihydroxy-2-naphthoate biosynthesis; 1,4-dihydroxy-2-naphthoate from chorismate: step 2/7. It participates in quinol/quinone metabolism; menaquinone biosynthesis. In terms of biological role, catalyzes the thiamine diphosphate-dependent decarboxylation of 2-oxoglutarate and the subsequent addition of the resulting succinic semialdehyde-thiamine pyrophosphate anion to isochorismate to yield 2-succinyl-5-enolpyruvyl-6-hydroxy-3-cyclohexene-1-carboxylate (SEPHCHC). The sequence is that of 2-succinyl-5-enolpyruvyl-6-hydroxy-3-cyclohexene-1-carboxylate synthase from Bacillus thuringiensis subsp. konkukian (strain 97-27).